A 318-amino-acid chain; its full sequence is Acetyl-coenzyme A carboxylase carboxyl transferase subunit alpha (318 aa).

Residues 38–292 (ALDRKAEEML…GEAIAAMLGE (255 aa)) form the CoA carboxyltransferase C-terminal domain.

The protein belongs to the AccA family. In terms of assembly, acetyl-CoA carboxylase is a heterohexamer composed of biotin carboxyl carrier protein (AccB), biotin carboxylase (AccC) and two subunits each of ACCase subunit alpha (AccA) and ACCase subunit beta (AccD).

The protein resides in the cytoplasm. The catalysed reaction is N(6)-carboxybiotinyl-L-lysyl-[protein] + acetyl-CoA = N(6)-biotinyl-L-lysyl-[protein] + malonyl-CoA. It functions in the pathway lipid metabolism; malonyl-CoA biosynthesis; malonyl-CoA from acetyl-CoA: step 1/1. In terms of biological role, component of the acetyl coenzyme A carboxylase (ACC) complex. First, biotin carboxylase catalyzes the carboxylation of biotin on its carrier protein (BCCP) and then the CO(2) group is transferred by the carboxyltransferase to acetyl-CoA to form malonyl-CoA. The protein is Acetyl-coenzyme A carboxylase carboxyl transferase subunit alpha of Paracoccus denitrificans (strain Pd 1222).